We begin with the raw amino-acid sequence, 216 residues long: Pyrophosphatase PpaX (216 aa).

The Nucleophile role is filled by Asp9.

This sequence belongs to the HAD-like hydrolase superfamily. PpaX family. The cofactor is Mg(2+).

It carries out the reaction diphosphate + H2O = 2 phosphate + H(+). Functionally, hydrolyzes pyrophosphate formed during P-Ser-HPr dephosphorylation by HPrK/P. Might play a role in controlling the intracellular pyrophosphate pool. This Bacillus cereus (strain AH820) protein is Pyrophosphatase PpaX.